A 993-amino-acid chain; its full sequence is MEKQKPFTLFVPPRLSSSQVSAVKPQTAGGDSNYFKTANKCTEGDFGVPFTMSSRENIDKDPAFQKLSILPMLEQVANSGSCHYQEGVNDSDFENSEPMSRLYSKLYKEAEKIKKWKVSIESELKQKENKLQENRKIIEAQRKAIQELQFENEKVSLKLEEEIQENKDLIKENNATIHWCNLLKETCARSAEKTNKYEYEREETRQVYVDLNSNIEKMILAFEELRVQAENARLEMHFKLKEDHEKIQHLEEEYQKEVNNKENQVSELLIQSAEKENKMKDLTFLLEESRDKANQLEEKTKLQDENLKELSEKKDHLTSELEDIKMSMQRSMSTQKALEEDLQIATKTISQLTEVKEAQMEELNKAKTTHSFVVTELKATTCTLEELLRTEQQRLEKNEDQLKLITVELQKKSNELEEMTKFKNNKEVELEELKNILAEDQKLLDEKKQVEKLAEELQEKEQELTFLLETREKEVHDLQEQVTVTKTSEQHYLKQVEEMKTELEKEKLKNTELTASCDMLLLENKKFVQEASDMALELKKHQEDIINCKKQEERLLKQIENLEEKEMHLRDELESVRKEFIQQGDEVKCKLDKSEENARSIECEVLKKEKQMKILESKCNNLKKQVENKSKNIEELHQENKTLKKKSSAEIKQLNAYEIKVSKLELELESTKQRFEEMTNNYQKEIENKKISEGKLLGEVEKAKATVDEAVKLQKEIDLRCQHKIAEMVALMEKHKHQYDKIVEERDSELGLYKNREQEQSSAKIALETELSNIRNELVSLKKQLEIEKEEKEKLKMAKENTAILKDKKDKKIQASLLESPEATSWKFDSKTTPSQNISRLSSSMDSGKSKDNRDNLRASAKSILPTTVTKEYTVKTPTKKSIYQRENKYIPTGGSNKKRKTAFEFDVNSDSSETADLLSLVSEEDVSNRLYDNNPPDSHLLVKTPKQTPLSLSTPASFMKFGSLKKMREDRWTTIAKIDRKRRLKEAEKLFS.

A Mediates head to head self-assembly of N-terminal ends motif is present at residues 98 to 108 (PMSRLYSKLYK). The Nuclear localization signal motif lies at 114–117 (KKWK). Coiled coils occupy residues 117 to 172 (KVSI…LIKE) and 215 to 688 (IEKM…EIEN). An interaction with SYCE3 region spans residues 203 to 359 (ETRQVYVDLN…SQLTEVKEAQ (157 aa)). Residues 694-788 (GKLLGEVEKA…VSLKKQLEIE (95 aa)) form a required for pH-induced assembly of C-terminal ends into antiparallel tetramers region. The short motif at 697–700 (LGEV) is the Nuclear localization signal element. The stretch at 764–808 (KIALETELSNIRNELVSLKKQLEIEKEEKEKLKMAKENTAILKDK) forms a coiled coil. Residues 801–993 (NTAILKDKKD…RLKEAEKLFS (193 aa)) form a DNA-binding region. Serine 820 is modified (phosphoserine). The segment at 824 to 861 (TSWKFDSKTTPSQNISRLSSSMDSGKSKDNRDNLRASA) is disordered. The segment covering 831 to 847 (KTTPSQNISRLSSSMDS) has biased composition (polar residues). Basic and acidic residues predominate over residues 848 to 857 (GKSKDNRDNL). Positions 898–901 (KKRK) match the Nuclear localization signal motif.

In terms of assembly, structural component of synaptonemal complexes. Homotetramer that consists of an N-terminal four-helical bundle that bifurcates into two elongated C-terminal dimeric coiled coils. This tetrameric building block potentially self-assembles into a supramolecular zipper-like lattice to mediate meiotic chromosome synapsis. Self-assembly is likely initiated by local proton density at chromosome axis, which is predicted to trigger antiparallel back to back assembly of adjacent C-terminal ends into tetrameric structures that anchor to chromosomal DNA. Then the N-terminal ends are predicted to undergo cooperative antiparallel head to head assembly at the midline of synaptonemal complexes central element to form a zipper-like lattice between properly aligned homologous chromosomes. The nascent synapsis generated by SYCP1 is stabilized through interaction with central element proteins SYCE1 and SYCE2. Interacts (via tetrameric core) with SYCE3; the interaction remodels SYCP1 homotetramers to 2:1 heterotrimers with SYCE3. SYCP1/SYCE3 heterotrimers form lattice assemblies as part of the mature synaptonemal complex via both lateral and head-to-head interactions. Forms a complex with EWSR1, PRDM9, SYCP3 and REC8; complex formation is dependent of phosphorylated form of REC8 and requires PRDM9 bound to hotspot DNA; EWSR1 joins PRDM9 with the chromosomal axis through REC8. Interacts with SPO16. Detected in testis. Detected in spermatocytes (at protein level).

It localises to the nucleus. The protein resides in the chromosome. Its subcellular location is the centromere. Its function is as follows. Major component of the transverse filaments of synaptonemal complexes, formed between homologous chromosomes during meiotic prophase. Required for normal assembly of the central element of the synaptonemal complexes. Required for normal centromere pairing during meiosis. Required for normal meiotic chromosome synapsis during oocyte and spermatocyte development and for normal male and female fertility. This is Synaptonemal complex protein 1 from Mus musculus (Mouse).